A 477-amino-acid polypeptide reads, in one-letter code: MEWDTVIGLEVHAQLKTKSKLFSGASTAFGATPNSQTSFIDAGLPGVLPVLNEQAIIMAIQFGLAIHGTINDLSVFERKNYFYPDLPKGYQISQYQKPIVTNGYLNIQLGNNLEKTVHIARAHLEEDAGKSLHDAHTDYTGIDLNRAGTPLLEIVTTPCLYSAEEAINYLKTLHQLVRFLGICDGNMQEGSFRCDVNLSIKPKGSSVLGTRTELKNLNSFRFIEKAIAFEQARHQDILESGLSVIQETRLYNPDNNTTQAMRGKENENDYRYFPDPDLLPIHIDKEQIEEIKNNLPDLPEAISKELKNTPSLNDEDINFILSSPDTYQYYKKIKSLCSAADKTIINWLKGQYAAFLNEHTLTFETPPISAKTMAAFLSKIHEKKISSSIAKNIFSMLCAGEEDIDAIIEREGYQQQNDNSALEEIVEQIIKQYPEQVTEYKAGKEKLLAFFIGQAMKQTKGKANPEQINLLLKKHLG.

The protein belongs to the GatB/GatE family. GatB subfamily. Heterotrimer of A, B and C subunits.

It carries out the reaction L-glutamyl-tRNA(Gln) + L-glutamine + ATP + H2O = L-glutaminyl-tRNA(Gln) + L-glutamate + ADP + phosphate + H(+). The catalysed reaction is L-aspartyl-tRNA(Asn) + L-glutamine + ATP + H2O = L-asparaginyl-tRNA(Asn) + L-glutamate + ADP + phosphate + 2 H(+). Functionally, allows the formation of correctly charged Asn-tRNA(Asn) or Gln-tRNA(Gln) through the transamidation of misacylated Asp-tRNA(Asn) or Glu-tRNA(Gln) in organisms which lack either or both of asparaginyl-tRNA or glutaminyl-tRNA synthetases. The reaction takes place in the presence of glutamine and ATP through an activated phospho-Asp-tRNA(Asn) or phospho-Glu-tRNA(Gln). This Legionella pneumophila (strain Lens) protein is Aspartyl/glutamyl-tRNA(Asn/Gln) amidotransferase subunit B.